We begin with the raw amino-acid sequence, 969 residues long: Probable Rho-type GTPase-activating protein 3 (969 aa).

LIM zinc-binding domains lie at 17-81 (TVCF…CTAC) and 76-135 (HTCT…RHPS). 3 disordered regions span residues 170-223 (IEIM…ADSL), 348-459 (ATSP…VEEL), and 613-646 (TSSK…SPNL). Polar residues predominate over residues 193-202 (ETPTNMSQAE). 2 stretches are compositionally biased toward low complexity: residues 212–223 (DSNLASNSADSL) and 350–361 (SPFRPFSPSYRS). Composition is skewed to polar residues over residues 369–392 (TRSP…SFAQ) and 418–432 (LSET…SLGS). Residues 450 to 459 (SERDSDVEEL) show a composition bias toward basic and acidic residues. The segment covering 613–623 (TSSKNTTSSIN) has biased composition (low complexity). Over residues 624 to 637 (PLTAVSSNSGQSSG) the composition is skewed to polar residues. The segment at 697-744 (DHVFHVNAIFKPSRCYICSESVWGSELRCFHCSISCHSRCLKRLFAES) adopts a Phorbol-ester/DAG-type zinc-finger fold. One can recognise a Rho-GAP domain in the interval 780–966 (RSLENQLKIE…FMLDNVDKIL (187 aa)).

Interacts with dil1.

The protein resides in the cell tip. Its function is as follows. GTPase-activating protein for Rho-type proteins. The chain is Probable Rho-type GTPase-activating protein 3 (rga3) from Schizosaccharomyces pombe (strain 972 / ATCC 24843) (Fission yeast).